Here is a 981-residue protein sequence, read N- to C-terminus: GPI ethanolamine phosphate transferase 1 (981 aa).

Residues 1–6 (MAGSSR) are Cytoplasmic-facing. Residues 7–27 (IGFMAIAVAFHLVYILSIFDI) form a helical membrane-spanning segment. At 28 to 464 (YFVSPIVTGM…LQTYDWLFLR (437 aa)) the chain is on the lumenal side. Residues Asn-148, Asn-211, and Asn-295 are each glycosylated (N-linked (GlcNAc...) asparagine). The chain crosses the membrane as a helical span at residues 465–485 (ALITIGYLGWMAYATTTVLSL). The Cytoplasmic segment spans residues 486–496 (YVVKESMSPQR). Residues 497–517 (TLLGSAFFLSLLVALYSSFII) form a helical membrane-spanning segment. The Lumenal portion of the chain corresponds to 518 to 519 (SK). The helical transmembrane segment at 520 to 540 (SPPAYYLYAFFPVLFWEEVYA) threads the bilayer. At 541-560 (RRANVAKGFQALFGHVKSGG) the chain is on the cytoplasmic side. Residues 561 to 581 (AVVALVFNVVLYLGVIQSLAL) form a helical membrane-spanning segment. Residues 582 to 587 (AYIHRE) lie on the Lumenal side of the membrane. Residues 588–608 (ILTGLFVLGAFWPMTQGISFL) form a helical membrane-spanning segment. Residues 609 to 611 (RSH) are Cytoplasmic-facing. The helical transmembrane segment at 612-632 (LFLSMLWFFSCLAMSTFTLLP) threads the bilayer. The Lumenal portion of the chain corresponds to 633 to 638 (AMKVED). A helical membrane pass occupies residues 639 to 659 (IPLIMAGGGLMTFVGLAYLVL). The Cytoplasmic portion of the chain corresponds to 660–681 (EDFILSDVSSSKTKLKRLHTSR). A helical transmembrane segment spans residues 682 to 702 (TLLGIQVGLIILAMLVTHSSA). The Lumenal portion of the chain corresponds to 703 to 708 (TSLQAK). Residues 709 to 729 (LGLPKGNQIVGWFVLVTSLLM) form a helical membrane-spanning segment. Topologically, residues 730–744 (PLAYRLQPNSHYMHR) are cytoplasmic. Residues 745 to 767 (LAIIFLTCAPTFVILTISYEGLF) traverse the membrane as a helical segment. The Lumenal segment spans residues 768-819 (YVAFSITLLSWVRLEYAVDAFTQEKAKKQATVAGSQQHTPSTFRPLSLSDAR). The helical transmembrane segment at 820 to 840 (IALFFMVLLQSAFFSTGNIAS) threads the bilayer. Residues 841–862 (ISSFSLESVSRLIPVFDPFSQG) are Cytoplasmic-facing. A helical membrane pass occupies residues 863–883 (ALLILKIIIPFFLISANLGVL). At 884–892 (NKRLGVAPS) the chain is on the lumenal side. The helical transmembrane segment at 893 to 913 (AIFMVVLTASDVLTLYFFWVV) threads the bilayer. Residues 914-929 (KDEGSWLEIGSTITHF) are Cytoplasmic-facing. Residues 930 to 950 (AIASFLCVFVAALEFVSAAFI) form a helical membrane-spanning segment. Residues 951 to 981 (AGIEVEDTKSAALTSASTKADEKVPPVAGAE) are Lumenal-facing.

This sequence belongs to the PIGG/PIGN/PIGO family. PIGN subfamily.

The protein resides in the endoplasmic reticulum membrane. It participates in glycolipid biosynthesis; glycosylphosphatidylinositol-anchor biosynthesis. Functionally, ethanolamine phosphate transferase involved in glycosylphosphatidylinositol-anchor biosynthesis. Transfers ethanolamine phosphate to the first alpha-1,4-linked mannose of the glycosylphosphatidylinositol precursor of GPI-anchor. The polypeptide is GPI ethanolamine phosphate transferase 1 (MCD4) (Gibberella zeae (strain ATCC MYA-4620 / CBS 123657 / FGSC 9075 / NRRL 31084 / PH-1) (Wheat head blight fungus)).